The following is a 355-amino-acid chain: UDP-N-acetylglucosamine--N-acetylmuramyl-(pentapeptide) pyrophosphoryl-undecaprenol N-acetylglucosamine transferase (355 aa).

UDP-N-acetyl-alpha-D-glucosamine contacts are provided by residues 15 to 17 (TGG), Asn-127, Arg-163, Ser-191, Ile-245, 264 to 269 (ALTVSE), and Gln-289.

Belongs to the glycosyltransferase 28 family. MurG subfamily.

It is found in the cell inner membrane. The enzyme catalyses di-trans,octa-cis-undecaprenyl diphospho-N-acetyl-alpha-D-muramoyl-L-alanyl-D-glutamyl-meso-2,6-diaminopimeloyl-D-alanyl-D-alanine + UDP-N-acetyl-alpha-D-glucosamine = di-trans,octa-cis-undecaprenyl diphospho-[N-acetyl-alpha-D-glucosaminyl-(1-&gt;4)]-N-acetyl-alpha-D-muramoyl-L-alanyl-D-glutamyl-meso-2,6-diaminopimeloyl-D-alanyl-D-alanine + UDP + H(+). It participates in cell wall biogenesis; peptidoglycan biosynthesis. Functionally, cell wall formation. Catalyzes the transfer of a GlcNAc subunit on undecaprenyl-pyrophosphoryl-MurNAc-pentapeptide (lipid intermediate I) to form undecaprenyl-pyrophosphoryl-MurNAc-(pentapeptide)GlcNAc (lipid intermediate II). This is UDP-N-acetylglucosamine--N-acetylmuramyl-(pentapeptide) pyrophosphoryl-undecaprenol N-acetylglucosamine transferase from Yersinia enterocolitica serotype O:8 / biotype 1B (strain NCTC 13174 / 8081).